Consider the following 342-residue polypeptide: MVWTQLHAEIHRTIRSRHLFEGNKRLLVAVSGGQDSLCLIKLLLDLQPKWGWELGIAHCDHRWRADSQANADHVKNLAENWGVSFYLETATKPVNSEATAREWRYQALSAIAQAHNYQYIVTGHTASDRAETLLYNLMRGTGADGLQALTWQRPLTENILLVRPLLEITRKQTEQFCQEFQLPIWEDSTNQDLKYARNRIRQELIPYLQANFNPQAELAIAQTAELLQADVEYLERTAQQLKEEAMEWEVGEEFLSSSSPSSLLLRLNRQVLQKAPLALQRRVMRQILQEILADAPNFEHIEKLTALITAPNRSQTDPFPGGAIAQVQGNWIILRNGERRSN.

ATP is bound at residue 31-36 (SGGQDS).

The protein belongs to the tRNA(Ile)-lysidine synthase family.

The protein localises to the cytoplasm. The catalysed reaction is cytidine(34) in tRNA(Ile2) + L-lysine + ATP = lysidine(34) in tRNA(Ile2) + AMP + diphosphate + H(+). Its function is as follows. Ligates lysine onto the cytidine present at position 34 of the AUA codon-specific tRNA(Ile) that contains the anticodon CAU, in an ATP-dependent manner. Cytidine is converted to lysidine, thus changing the amino acid specificity of the tRNA from methionine to isoleucine. The polypeptide is tRNA(Ile)-lysidine synthase (Nostoc sp. (strain PCC 7120 / SAG 25.82 / UTEX 2576)).